The sequence spans 302 residues: HTH-type transcriptional regulator GbpR (302 aa).

In terms of domain architecture, HTH lysR-type spans 1 to 56 (MSHLRMLVMIEEHGQVSAAAAAMNMTQPAASRMLSEMEAIVKSPLCQRASRGVVLT). The segment at residues 16–35 (VSAAAAAMNMTQPAASRMLS) is a DNA-binding region (H-T-H motif).

The protein belongs to the LysR transcriptional regulatory family.

Its function is as follows. Activator of the expression of chvE when bound to its inducer and represses its expression in the absence of inducer (L-arabinose, D-fucose or D-galactose). Negatively regulates its own expression. This is HTH-type transcriptional regulator GbpR (gbpR) from Rhizobium radiobacter (Agrobacterium tumefaciens).